A 144-amino-acid polypeptide reads, in one-letter code: Large ribosomal subunit protein uL15 (144 aa).

The interval 1–62 (MELNNLKPAE…GQMPLQRRLP (62 aa)) is disordered. Residues 21-31 (RGIGSGLGKTA) are compositionally biased toward gly residues.

This sequence belongs to the universal ribosomal protein uL15 family. Part of the 50S ribosomal subunit.

Binds to the 23S rRNA. The polypeptide is Large ribosomal subunit protein uL15 (Paraburkholderia phymatum (strain DSM 17167 / CIP 108236 / LMG 21445 / STM815) (Burkholderia phymatum)).